The following is a 501-amino-acid chain: Cytochrome P450 71B25 (501 aa).

The helical transmembrane segment at 1-21 threads the bilayer; sequence MAILQSFLLLLSLPFLFTLIY. Position 445 (Cys-445) interacts with heme.

The protein belongs to the cytochrome P450 family. The cofactor is heme.

The protein localises to the membrane. This chain is Cytochrome P450 71B25 (CYP71B25), found in Arabidopsis thaliana (Mouse-ear cress).